Here is a 433-residue protein sequence, read N- to C-terminus: Malate synthase (433 aa).

Residue Thr-16 to Ser-17 coordinates acetyl-CoA. Position 52 (Asp-52) interacts with Mg(2+). An acetyl-CoA-binding site is contributed by Arg-84. Glyoxylate is bound by residues Arg-84, Glu-158, and Val-191–Asp-192. Glu-158 and Asp-192 together coordinate Mg(2+). Acetyl-CoA-binding residues include Arg-236 and Leu-259. The active-site Proton acceptor is Asp-388.

The protein belongs to the HpcH/HpaI aldolase family. As to quaternary structure, homotrimer and homohexamer in equilibrium. The cofactor is Mg(2+).

Its subcellular location is the cytoplasm. It carries out the reaction glyoxylate + acetyl-CoA + H2O = (S)-malate + CoA + H(+). Its pathway is carbohydrate metabolism; glyoxylate cycle; (S)-malate from isocitrate: step 2/2. Its function is as follows. Involved in the glyoxylate cycle which synthesizes precursors for carbohydrates from C2 compounds such as acetate. Catalyzes the Claisen condensation between acetyl-coenzyme A (acetyl-CoA) and glyoxylate to form the malyl-CoA intermediate that is subsequently hydrolyzed to produce malate and CoA. The polypeptide is Malate synthase (aceB) (Haloferax volcanii (strain ATCC 29605 / DSM 3757 / JCM 8879 / NBRC 14742 / NCIMB 2012 / VKM B-1768 / DS2) (Halobacterium volcanii)).